The sequence spans 390 residues: MPPKQHRHQKKDKNDNALQNTIGFVPPGATLASVSGYRPPDAFVNRIDRNIPVPARLRHTPVSLIEAVNDFHYAMMNDEERNNFYYEVLKKHVTPETGVLEIGAGSGLLSLMAAKLGAKWVVAVEGSEELAKLARENIRANNMEHQVKVLHMMSTELKSKHLPEPPDVLLSEIFGTMMLGESALDYVVDVRNRLLKPTTKIIPQFGTQYAVPIECDALHRISSVSGWRDLDLKHMMTLQDTVSIVFAKHYGIRMNSVNFRRLSDPIELFRVDFSSSNRNDIPRRKHFDVVAKESGTAHAMLFYWKVTDDEFVMSTDPEDTVNNFPRDMQWGQALQLLDASNGPLPTPVVFTEGKNYNFECNFSGDRVILHMQLCPESGNGEMTECEGKTT.

Basic residues predominate over residues 1 to 11 (MPPKQHRHQKK). The segment at 1 to 20 (MPPKQHRHQKKDKNDNALQN) is disordered. Positions 55 to 372 (ARLRHTPVSL…SGDRVILHMQ (318 aa)) constitute an SAM-dependent MTase PRMT-type domain. Catalysis depends on residues Glu172 and Glu181.

Belongs to the class I-like SAM-binding methyltransferase superfamily. Protein arginine N-methyltransferase family. PRMT7 subfamily. In terms of assembly, present in large multiprotein complexes.

It is found in the cytoplasm. In terms of biological role, arginine methyltransferase that specifically catalyzes the formation of omega-N monomethylarginine (MMA). Has activity toward multiple substrates in vitro. Able to mediate the arginine methylation of histones and myelin basic protein (MBP) in vitro; the relevance of such results is however unclear in vivo. This chain is Protein arginine N-methyltransferase 7 (PRMT7), found in Trypanosoma brucei brucei (strain 927/4 GUTat10.1).